Here is a 264-residue protein sequence, read N- to C-terminus: Thymidylate synthase (264 aa).

Position 21 (arginine 21) interacts with dUMP. Histidine 51 contributes to the (6R)-5,10-methylene-5,6,7,8-tetrahydrofolate binding site. 126-127 (RR) contacts dUMP. The active-site Nucleophile is cysteine 146. DUMP is bound by residues 166–169 (RSAD), asparagine 177, and 207–209 (HLY). Position 169 (aspartate 169) interacts with (6R)-5,10-methylene-5,6,7,8-tetrahydrofolate. Alanine 263 is a binding site for (6R)-5,10-methylene-5,6,7,8-tetrahydrofolate.

Belongs to the thymidylate synthase family. Bacterial-type ThyA subfamily. In terms of assembly, homodimer.

The protein resides in the cytoplasm. The enzyme catalyses dUMP + (6R)-5,10-methylene-5,6,7,8-tetrahydrofolate = 7,8-dihydrofolate + dTMP. It functions in the pathway pyrimidine metabolism; dTTP biosynthesis. Its function is as follows. Catalyzes the reductive methylation of 2'-deoxyuridine-5'-monophosphate (dUMP) to 2'-deoxythymidine-5'-monophosphate (dTMP) while utilizing 5,10-methylenetetrahydrofolate (mTHF) as the methyl donor and reductant in the reaction, yielding dihydrofolate (DHF) as a by-product. This enzymatic reaction provides an intracellular de novo source of dTMP, an essential precursor for DNA biosynthesis. In Chromobacterium violaceum (strain ATCC 12472 / DSM 30191 / JCM 1249 / CCUG 213 / NBRC 12614 / NCIMB 9131 / NCTC 9757 / MK), this protein is Thymidylate synthase.